The sequence spans 95 residues: UPF0358 protein BA_4159/GBAA_4159/BAS3861 (95 aa).

The protein belongs to the UPF0358 family.

This is UPF0358 protein BA_4159/GBAA_4159/BAS3861 from Bacillus anthracis.